Here is a 273-residue protein sequence, read N- to C-terminus: Neuferricin (273 aa).

Residues 1–22 form the signal peptide; the sequence is MLGYLAAAALCLAAVLLMRLDH. The Cytochrome b5 heme-binding domain occupies 44–143; sequence GRLMSKEELS…QNYITIGKLT (100 aa).

The protein belongs to the cytochrome b5 family. MAPR subfamily.

The protein resides in the secreted. Heme-binding protein which promotes neuronal but not astrocyte differentiation. This Xenopus tropicalis (Western clawed frog) protein is Neuferricin (cyb5d2).